The chain runs to 449 residues: Glucose-6-phosphate isomerase (449 aa).

Glu-291 functions as the Proton donor in the catalytic mechanism. Catalysis depends on residues His-312 and Lys-426.

Belongs to the GPI family.

It is found in the cytoplasm. The catalysed reaction is alpha-D-glucose 6-phosphate = beta-D-fructose 6-phosphate. The protein operates within carbohydrate biosynthesis; gluconeogenesis. It functions in the pathway carbohydrate degradation; glycolysis; D-glyceraldehyde 3-phosphate and glycerone phosphate from D-glucose: step 2/4. In terms of biological role, catalyzes the reversible isomerization of glucose-6-phosphate to fructose-6-phosphate. This chain is Glucose-6-phosphate isomerase, found in Streptococcus pyogenes serotype M28 (strain MGAS6180).